Consider the following 303-residue polypeptide: Serine/threonine-protein phosphatase PP-X homolog 2 (303 aa).

Mn(2+) is bound by residues aspartate 51, histidine 53, aspartate 79, and asparagine 111. Histidine 112 acts as the Proton donor in catalysis. Positions 161 and 235 each coordinate Mn(2+).

The protein belongs to the PPP phosphatase family. PP-4 (PP-X) subfamily. The cofactor is Mn(2+).

It carries out the reaction O-phospho-L-seryl-[protein] + H2O = L-seryl-[protein] + phosphate. It catalyses the reaction O-phospho-L-threonyl-[protein] + H2O = L-threonyl-[protein] + phosphate. The chain is Serine/threonine-protein phosphatase PP-X homolog 2 (Ppx2) from Paramecium tetraurelia.